We begin with the raw amino-acid sequence, 221 residues long: Small ribosomal subunit protein eS8 (221 aa).

Disordered stretches follow at residues 1 to 41 (MGIS…LSSN) and 128 to 169 (TPAA…TLDP). Residues 8 to 26 (MHKRRATGGKQKAWRKKRK) show a composition bias toward basic residues. Over residues 146–169 (EETKKSNHVTRKLEKRKEGRTLDP) the composition is skewed to basic and acidic residues.

It belongs to the eukaryotic ribosomal protein eS8 family.

The polypeptide is Small ribosomal subunit protein eS8 (RPS8) (Zea mays (Maize)).